A 309-amino-acid polypeptide reads, in one-letter code: Zinc finger protein-like 1 homolog (309 aa).

The B box-type; degenerate zinc finger occupies 1 to 43 (MGLCKCPKRKVTNLFCYEHRVNVCEFCLVDNHPNCVVQSYLTW). An RING-type; atypical zinc finger spans residues 53–101 (CSLCKTTLAEGDTIRLNCLHLLHWKCFDEWAANFPATTAPAGYRCPCCS). The tract at residues 200–221 (GAESSSDTRPLLQLRDADNEEN) is disordered. The chain crosses the membrane as a helical span at residues 254-274 (KIALFVIFLAVLALITIIMVM).

This sequence belongs to the ZFPL1 family.

The protein resides in the membrane. This is Zinc finger protein-like 1 homolog from Caenorhabditis elegans.